A 116-amino-acid chain; its full sequence is Nucleoid-associated protein MLBr02330 (116 aa).

The tract at residues 96 to 116 (LTSAMRPTAPPPTPPTYMAGT) is disordered.

This sequence belongs to the YbaB/EbfC family. Homodimer.

The protein localises to the cytoplasm. Its subcellular location is the nucleoid. Functionally, binds to DNA and alters its conformation. May be involved in regulation of gene expression, nucleoid organization and DNA protection. This Mycobacterium leprae (strain Br4923) protein is Nucleoid-associated protein MLBr02330.